The primary structure comprises 111 residues: Cytochrome c (111 aa).

The residue at position 1 (Ala-1) is an N-acetylalanine. Residues Cys-22, Cys-25, and His-26 each contribute to the heme c site. Lys-80 carries the N6,N6,N6-trimethyllysine modification. Position 88 (Met-88) interacts with heme c. At Lys-94 the chain carries N6,N6,N6-trimethyllysine.

The protein belongs to the cytochrome c family. Binds 1 heme c group covalently per subunit.

Its subcellular location is the mitochondrion intermembrane space. Electron carrier protein. The oxidized form of the cytochrome c heme group can accept an electron from the heme group of the cytochrome c1 subunit of cytochrome reductase. Cytochrome c then transfers this electron to the cytochrome oxidase complex, the final protein carrier in the mitochondrial electron-transport chain. This Cannabis sativa (Hemp) protein is Cytochrome c.